The chain runs to 670 residues: UvrABC system protein B (670 aa).

A Helicase ATP-binding domain is found at 26–183 (NGLKSGLAFQ…QRLVDLQYNR (158 aa)). Position 39–46 (39–46 (GVTGSGKT)) interacts with ATP. The short motif at 92-115 (YYDYYQPEAYVPSSDSFIEKDAAI) is the Beta-hairpin element. The Helicase C-terminal domain occupies 431–597 (QVDDLLSEIN…GLSKQVNDVM (167 aa)). The UVR domain occupies 630-665 (LKQIALSEKQMFACAKNLEFEKAALFRDEVTKLHEQ).

The protein belongs to the UvrB family. In terms of assembly, forms a heterotetramer with UvrA during the search for lesions. Interacts with UvrC in an incision complex.

The protein resides in the cytoplasm. The UvrABC repair system catalyzes the recognition and processing of DNA lesions. A damage recognition complex composed of 2 UvrA and 2 UvrB subunits scans DNA for abnormalities. Upon binding of the UvrA(2)B(2) complex to a putative damaged site, the DNA wraps around one UvrB monomer. DNA wrap is dependent on ATP binding by UvrB and probably causes local melting of the DNA helix, facilitating insertion of UvrB beta-hairpin between the DNA strands. Then UvrB probes one DNA strand for the presence of a lesion. If a lesion is found the UvrA subunits dissociate and the UvrB-DNA preincision complex is formed. This complex is subsequently bound by UvrC and the second UvrB is released. If no lesion is found, the DNA wraps around the other UvrB subunit that will check the other stand for damage. In Psychromonas ingrahamii (strain DSM 17664 / CCUG 51855 / 37), this protein is UvrABC system protein B.